We begin with the raw amino-acid sequence, 705 residues long: Elongation factor G (705 aa).

The 281-residue stretch at 7 to 287 folds into the tr-type G domain; it reads HLTRNIGIMA…YVCAFLPSPL (281 aa). GTP contacts are provided by residues 16–23, 84–88, and 138–141; these read AHIDAGKT, DTPGH, and NKMD.

Belongs to the TRAFAC class translation factor GTPase superfamily. Classic translation factor GTPase family. EF-G/EF-2 subfamily.

The protein localises to the cytoplasm. In terms of biological role, catalyzes the GTP-dependent ribosomal translocation step during translation elongation. During this step, the ribosome changes from the pre-translocational (PRE) to the post-translocational (POST) state as the newly formed A-site-bound peptidyl-tRNA and P-site-bound deacylated tRNA move to the P and E sites, respectively. Catalyzes the coordinated movement of the two tRNA molecules, the mRNA and conformational changes in the ribosome. This Bacteroides thetaiotaomicron (strain ATCC 29148 / DSM 2079 / JCM 5827 / CCUG 10774 / NCTC 10582 / VPI-5482 / E50) protein is Elongation factor G.